The primary structure comprises 1460 residues: Nucleoporin NUP159 (1460 aa).

The interval 1 to 500 (MSSLKDEVPT…SEQDATDPAS (500 aa)) is interaction with DBP5. The stretch at 228–231 (AVFG) is one FG 1 repeat. The PXFG 1 repeat unit spans residues 267-270 (PPFG). The interval 401 to 435 (KSLSPTSEKIPIAGQEQEEKKKNNESSKALSENPF) is disordered. A Phosphoserine modification is found at serine 404. The SXFGXPXFG 1 repeat unit spans residues 462 to 470 (STFGAPSFG). The disordered stretch occupies residues 483 to 504 (STSTGVASSEQDATDPASAKPV). Residues 497–701 (DPASAKPVFG…KPNTSTKPKT (205 aa)) are interactions with CRM1 and GLE1. The stretch at 503–511 (PVFGKPAFG) is one SXFGXPXFG 2; approximate repeat. Residues 522–530 (YAFGKPSFG) form an SXFGXPXFG 3; approximate repeat. One copy of the PXFG 2 repeat lies at 532–535 (PSFG). The tract at residues 533-619 (SFGSGKSSVE…SAFGTASSNE (87 aa)) is disordered. Polar residues-rich tracts occupy residues 536–546 (SGKSSVESPAS), 556–567 (GTPSFGSGNSSV), 582–593 (GTPSFGSGNSSA), and 607–619 (FGTS…SSNE). The stretch at 548-556 (SAFGKPSFG) is one SXFGXPXFG 4 repeat. The stretch at 558-561 (PSFG) is one PXFG 3 repeat. An SXFGXPXFG 5 repeat occupies 574-582 (SAFGKPSFG). One copy of the PXFG 4 repeat lies at 584–587 (PSFG). An SXFGXPXFG 6 repeat occupies 600–608 (SAFGKPSFG). The stretch at 610–613 (SAFG) is one SXFG 1 repeat. The SXFGXPXFG 7; approximate repeat unit spans residues 624 to 632 (SIFGKAAFG). An FG 2 repeat occupies 642 to 645 (ELFG). Positions 647–704 (NFTISKPTVDSPKEVDSTSPFPSSGDQSEDESKSDVDSSSTPFGTKPNTSTKPKTNAF) are disordered. The residue at position 657 (serine 657) is a Phosphoserine. Positions 683–704 (DSSSTPFGTKPNTSTKPKTNAF) are enriched in low complexity. The stretch at 687–690 (TPFG) is one FG 3 repeat. The stretch at 704–707 (FDFG) is one FXFG 1 repeat. One copy of the SXFG 2 repeat lies at 709–712 (SSFG). Serine 724 is modified (phosphoserine). Polar residues-rich tracts occupy residues 727 to 750 (TFKF…FSSF), 757 to 767 (NGSLSKGSTSE), and 778 to 800 (NGPN…STRL). The disordered stretch occupies residues 727-824 (TFKFGTQASP…EAQKSPIGKL (98 aa)). One copy of the FXFG 2 repeat lies at 728 to 731 (FKFG). Phosphoserine occurs at positions 735 and 745. At threonine 803 the chain carries Phosphothreonine. A compositionally biased stretch (acidic residues) spans 804–814 (PSDEDGEVVEE). Phosphoserine is present on residues serine 805 and serine 819. One copy of the PXFG 5 repeat lies at 842–845 (PVFG). Over residues 861-889 (TNITKPSSTTPAFSFGNSTMNKSNTSTVS) the composition is skewed to polar residues. The segment at 861-1092 (TNITKPSSTT…DINTDELPHG (232 aa)) is disordered. The stretch at 873–876 (FSFG) is one FXFG 3 repeat. At serine 889 the chain carries Phosphoserine. Residues 917-936 (AKEERTGESSKKDHNDDPKD) are compositionally biased toward basic and acidic residues. Serine 940 bears the Phosphoserine mark. The segment covering 942-958 (SEISVRTSESAFDTTAN) has biased composition (polar residues). 4 stretches are compositionally biased toward basic and acidic residues: residues 960–1002 (EIPK…KNNE), 1017–1027 (ALKKDNEKENF), 1035–1061 (QFED…KESD), and 1068–1092 (SDRD…LPHG). The segment at 1086-1175 (TDELPHGGEA…TCNFSVQTFE (90 aa)) is interaction with DYN2. An interaction with NUP82 region spans residues 1223–1460 (AEFTVLMENI…DFFKNLNMAK (238 aa)). Coiled coils occupy residues 1279-1320 (EQMQ…YLFL) and 1383-1418 (AKLA…GKKA).

In terms of assembly, component of the nuclear pore complex (NPC). NPC constitutes the exclusive means of nucleocytoplasmic transport. NPCs allow the passive diffusion of ions and small molecules and the active, nuclear transport receptor-mediated bidirectional transport of macromolecules such as proteins, RNAs, ribonucleoparticles (RNPs), and ribosomal subunits across the nuclear envelope. Due to its 8-fold rotational symmetry, all subunits are present with 8 copies or multiples thereof. Part of the NUP82 subcomplex, interacts with NUP82 through its C-terminal coiled coil. This subcomplex is the base for interactions with NUP116 and GLE2, with NUP42 and GLE1 and with DYN2. Interacts directly with DYN2. Interacts through its FG repeats with karyopherins, such as heterodimeric mRNA transport factor MEX67/MTR2, CRM1 (XPO1), and PSE1 (GSP1-GDP dependent). Interaction with CRM1 (XPO1) is GSP1-GTP dependent and stimulated by RNA1. NUP159 also interacts with GLE1 and the ATP-dependent RNA helicase DBP5.

It is found in the nucleus. Its subcellular location is the nuclear pore complex. It localises to the nucleus membrane. In terms of biological role, functions as a component of the nuclear pore complex (NPC). NPC components, collectively referred to as nucleoporins (NUPs), can play the role of both NPC structural components and of docking or interaction partners for transiently associated nuclear transport factors. Active directional transport is assured by both, a Phe-Gly (FG) repeat affinity gradient for these transport factors across the NPC and a transport cofactor concentration gradient across the nuclear envelope (GSP1 and GSP2 GTPases associated predominantly with GTP in the nucleus, with GDP in the cytoplasm). NUP159 plays an important role in several nuclear export pathways including poly(A)+ RNA, pre-ribosome, and protein export. The polypeptide is Nucleoporin NUP159 (NUP159) (Saccharomyces cerevisiae (strain ATCC 204508 / S288c) (Baker's yeast)).